Here is a 521-residue protein sequence, read N- to C-terminus: 3,4-dihydroxyphenylacetaldehyde synthase (521 aa).

K306 bears the N6-(pyridoxal phosphate)lysine mark.

The protein belongs to the group II decarboxylase family. It depends on pyridoxal 5'-phosphate as a cofactor. As to expression, highly expressed in the cuticle and midgut. Low expression in the head and thorax.

The catalysed reaction is L-dopa + O2 + H2O + H(+) = 3,4-dihydroxyphenylacetaldehyde + H2O2 + NH4(+) + CO2. Functionally, catalyzes the decarboxylation-oxidative deamination of L-3,4-dihydroxyphenylalanine (L-DOPA) to 3,4-dihydroxylphenylacetaldehyde (DHPAA). Involved in cuticle development. Probably responsible for the protein cross-linking during the development of flexible cuticles. This Aedes aegypti (Yellowfever mosquito) protein is 3,4-dihydroxyphenylacetaldehyde synthase.